Reading from the N-terminus, the 271-residue chain is 4-hydroxy-tetrahydrodipicolinate reductase (271 aa).

NAD(+)-binding positions include 12–17 and E38; that span reads GGSGRM. R39 contributes to the NADP(+) binding site. Residues 102–104 and 126–129 each bind NAD(+); these read GTT and APNM. Catalysis depends on H159, which acts as the Proton donor/acceptor. (S)-2,3,4,5-tetrahydrodipicolinate is bound at residue H160. The active-site Proton donor is K163. 169–170 provides a ligand contact to (S)-2,3,4,5-tetrahydrodipicolinate; it reads GT.

It belongs to the DapB family.

It localises to the cytoplasm. It catalyses the reaction (S)-2,3,4,5-tetrahydrodipicolinate + NAD(+) + H2O = (2S,4S)-4-hydroxy-2,3,4,5-tetrahydrodipicolinate + NADH + H(+). It carries out the reaction (S)-2,3,4,5-tetrahydrodipicolinate + NADP(+) + H2O = (2S,4S)-4-hydroxy-2,3,4,5-tetrahydrodipicolinate + NADPH + H(+). Its pathway is amino-acid biosynthesis; L-lysine biosynthesis via DAP pathway; (S)-tetrahydrodipicolinate from L-aspartate: step 4/4. Functionally, catalyzes the conversion of 4-hydroxy-tetrahydrodipicolinate (HTPA) to tetrahydrodipicolinate. In Shewanella sediminis (strain HAW-EB3), this protein is 4-hydroxy-tetrahydrodipicolinate reductase.